A 157-amino-acid chain; its full sequence is Transcription factor HES-2 (157 aa).

Residues L13–Q70 form the bHLH domain. One can recognise an Orange domain in the interval Y86 to L119. Residues V124–W157 are disordered. The segment covering S125–P139 has biased composition (low complexity). The span at A140 to S149 shows a compositional bias: pro residues. A WRPW motif motif is present at residues W154 to W157.

As to quaternary structure, transcription repression requires formation of a complex with a corepressor protein of the Groucho/TLE family.

Its subcellular location is the nucleus. Its function is as follows. Transcriptional repressor of genes that require a bHLH protein for their transcription. This Rattus norvegicus (Rat) protein is Transcription factor HES-2 (Hes2).